A 451-amino-acid polypeptide reads, in one-letter code: Aspartate aminotransferase, mitochondrial (451 aa).

Residues G52, W155, and N216 each contribute to the L-aspartate site. K286 carries the post-translational modification N6-(pyridoxal phosphate)lysine. Residue R423 participates in L-aspartate binding.

The protein belongs to the class-I pyridoxal-phosphate-dependent aminotransferase family. In terms of assembly, homodimer. Pyridoxal 5'-phosphate is required as a cofactor.

It is found in the mitochondrion matrix. The catalysed reaction is L-aspartate + 2-oxoglutarate = oxaloacetate + L-glutamate. In terms of biological role, plays a key role in amino acid metabolism. Important for metabolite exchange between mitochondria and cytosol. The polypeptide is Aspartate aminotransferase, mitochondrial (AAT1) (Saccharomyces cerevisiae (strain ATCC 204508 / S288c) (Baker's yeast)).